The chain runs to 729 residues: Sodium-dependent neutral amino acid transporter B(0)AT2 (729 aa).

The Cytoplasmic portion of the chain corresponds to 1–69 (MPKNSKVVKR…ERPAWNSKLQ (69 aa)). 2 positions are modified to phosphoserine: serine 25 and serine 55. The segment at 42-61 (DVQEEKDTDAEDGSEADDER) is disordered. The segment covering 43–59 (VQEEKDTDAEDGSEADD) has biased composition (acidic residues). Transmembrane regions (helical) follow at residues 70-90 (YILA…FPYL), 98-117 (AYLL…LFFL), and 142-162 (GIGF…NVII). Over 163–225 (GWTLFYFSQS…SSISDSGGLN (63 aa)) the chain is Extracellular. An N-linked (GlcNAc...) asparagine glycan is attached at asparagine 187. Helical transmembrane passes span 226–244 (WKMT…LAMI) and 253–270 (IMYF…CFLI). N-linked (GlcNAc...) asparagine glycosylation is present at asparagine 276. Helical transmembrane passes span 306 to 323 (VFFA…FSSY) and 335 to 356 (VLVS…FAVL). Residues 357 to 452 (GFKANIVNEK…FIAFTEAMTH (96 aa)) lie on the Extracellular side of the membrane. Residues asparagine 383 and asparagine 394 are each glycosylated (N-linked (GlcNAc...) asparagine). 5 consecutive transmembrane segments (helical) span residues 453–472 (FPAS…NLGL), 496–514 (ILTV…IFVQ), 530–550 (TLPL…VYGI), 571–592 (YMWK…IVNM), and 620–642 (VVCF…IRRC). Topologically, residues 643–729 (NLIDDSSGNL…DMPDMPESDL (87 aa)) are cytoplasmic. 3 positions are modified to phosphoserine: serine 687, serine 699, and serine 701.

The protein belongs to the sodium:neurotransmitter symporter (SNF) (TC 2.A.22) family. SLC6A15 subfamily. In terms of tissue distribution, significant expressed in brain, lung and kidney. In brain, mainly expressed int the cortex, the cerebellum and the brain stem.

It localises to the membrane. It catalyses the reaction L-pipecolate(in) + Na(+)(in) = L-pipecolate(out) + Na(+)(out). The enzyme catalyses L-leucine(in) + Na(+)(in) = L-leucine(out) + Na(+)(out). The catalysed reaction is L-isoleucine(in) + Na(+)(in) = L-isoleucine(out) + Na(+)(out). It carries out the reaction L-methionine(in) + Na(+)(in) = L-methionine(out) + Na(+)(out). It catalyses the reaction L-proline(in) + Na(+)(in) = L-proline(out) + Na(+)(out). The enzyme catalyses L-alanine(in) + Na(+)(in) = L-alanine(out) + Na(+)(out). The catalysed reaction is L-asparagine(in) + Na(+)(in) = L-asparagine(out) + Na(+)(out). It carries out the reaction L-valine(in) + Na(+)(in) = L-valine(out) + Na(+)(out). It catalyses the reaction L-cysteine(in) + Na(+)(in) = L-cysteine(out) + Na(+)(out). The enzyme catalyses L-glutamine(in) + Na(+)(in) = L-glutamine(out) + Na(+)(out). The catalysed reaction is L-serine(in) + Na(+)(in) = L-serine(out) + Na(+)(out). It carries out the reaction L-threonine(in) + Na(+)(in) = L-threonine(out) + Na(+)(out). It catalyses the reaction L-phenylalanine(in) + Na(+)(in) = L-phenylalanine(out) + Na(+)(out). In terms of biological role, functions as a sodium-dependent neutral amino acid transporter. Exhibits preference for methionine and for the branched-chain amino acids, particularly leucine, valine and isoleucine. Can also transport low-affinity substrates such as alanine, phenylalanine, glutamine and pipecolic acid. Mediates the saturable, pH-sensitive and electrogenic cotransport of proline and sodium ions with a stoichiometry of 1:1. May have a role as transporter for neurotransmitter precursors into neurons. In contrast to other members of the neurotransmitter transporter family, does not appear to be chloride-dependent. In Mus musculus (Mouse), this protein is Sodium-dependent neutral amino acid transporter B(0)AT2 (Slc6a15).